The chain runs to 251 residues: Octanoyltransferase (251 aa).

The BPL/LPL catalytic domain occupies 49 to 230 (DEIADQILVL…DLDDAFAGRL (182 aa)). Substrate-binding positions include 87 to 94 (RGGRITWH), 160 to 162 (ALG), and 173 to 175 (GLA). Cys191 acts as the Acyl-thioester intermediate in catalysis.

It belongs to the LipB family.

Its subcellular location is the cytoplasm. It carries out the reaction octanoyl-[ACP] + L-lysyl-[protein] = N(6)-octanoyl-L-lysyl-[protein] + holo-[ACP] + H(+). Its pathway is protein modification; protein lipoylation via endogenous pathway; protein N(6)-(lipoyl)lysine from octanoyl-[acyl-carrier-protein]: step 1/2. In terms of biological role, catalyzes the transfer of endogenously produced octanoic acid from octanoyl-acyl-carrier-protein onto the lipoyl domains of lipoate-dependent enzymes. Lipoyl-ACP can also act as a substrate although octanoyl-ACP is likely to be the physiological substrate. This Corynebacterium efficiens (strain DSM 44549 / YS-314 / AJ 12310 / JCM 11189 / NBRC 100395) protein is Octanoyltransferase.